The chain runs to 299 residues: Mitochondrial magnesium exporter 1 (299 aa).

Solcar repeat units follow at residues 12–103 (SNPV…GKRL), 112–200 (LTYP…LQEL), and 210–296 (ISTT…TNDL). The next 4 helical transmembrane spans lie at 79–99 (ISAPLVGVTPIYAVDFAVYAA), 114–134 (YPQIFAAGALAGVCSALVTVP), 216–236 (ILSGGTAGIVFWTLAVPFDVL), and 272–292 (ILPILLRAFPSTAAVFFGVEL).

The protein belongs to the mitochondrial carrier (TC 2.A.29) family.

The protein localises to the mitochondrion membrane. Mediates efflux of magnesium ions from mitochondria, suggesting a role in magnesium homeostasis. The chain is Mitochondrial magnesium exporter 1 from Drosophila melanogaster (Fruit fly).